A 459-amino-acid chain; its full sequence is Mitochondrial distribution and morphology protein 10 (459 aa).

This sequence belongs to the MDM10 family. As to quaternary structure, component of the ER-mitochondria encounter structure (ERMES) or MDM complex, composed of MMM1, MDM10, MDM12 and MDM34. Associates with the mitochondrial outer membrane sorting assembly machinery SAM(core) complex.

The protein localises to the mitochondrion outer membrane. In terms of biological role, component of the ERMES/MDM complex, which serves as a molecular tether to connect the endoplasmic reticulum and mitochondria. Components of this complex are involved in the control of mitochondrial shape and protein biogenesis and may function in phospholipid exchange. MDM10 is involved in the late assembly steps of the general translocase of the mitochondrial outer membrane (TOM complex). Functions in the TOM40-specific route of the assembly of outer membrane beta-barrel proteins, including the association of TOM40 with the receptor TOM22 and small TOM proteins. Can associate with the SAM(core) complex as well as the MDM12-MMM1 complex, both involved in late steps of the major beta-barrel assembly pathway, that is responsible for biogenesis of all outer membrane beta-barrel proteins. May act as a switch that shuttles between both complexes and channels precursor proteins into the TOM40-specific pathway. Plays a role in mitochondrial morphology and in the inheritance of mitochondria. This Clavispora lusitaniae (strain ATCC 42720) (Yeast) protein is Mitochondrial distribution and morphology protein 10.